The primary structure comprises 130 residues: Small ribosomal subunit protein uS9 (130 aa).

This sequence belongs to the universal ribosomal protein uS9 family.

This chain is Small ribosomal subunit protein uS9, found in Burkholderia multivorans (strain ATCC 17616 / 249).